The chain runs to 163 residues: Pheromone-binding protein 1 (163 aa).

The N-terminal stretch at 1–21 (MLGKISLLLLPVFVAINLVHS) is a signal peptide. Cystine bridges form between C40/C75, C71/C129, and C118/C138.

Belongs to the PBP/GOBP family. In terms of tissue distribution, antenna.

In terms of biological role, this major soluble protein in olfactory sensilla of male moths might serve to solubilize the extremely hydrophobic pheromone molecules and to transport pheromone through the aqueous lymph to receptors located on olfactory cilia. The protein is Pheromone-binding protein 1 of Antheraea pernyi (Chinese oak silk moth).